The chain runs to 730 residues: Multifunctional procollagen lysine hydroxylase and glycosyltransferase (730 aa).

An N-terminal signal peptide occupies residues 1–16 (MRVLPFLLPLIPVLLA). Residues 20 to 280 (TDLPELVVVT…CGLEVKESEE (261 aa)) are required for glycosyltransferase activity. UDP-binding positions include 30 to 32 (VAT) and 98 to 100 (DAY). Residues Asp98, Asp101, and His242 each coordinate Mn(2+). Position 245–248 (245–248 (GPSK)) interacts with UDP. A disulfide bridge links Cys268 with Cys271. The segment at 281-507 (VPLIALNLFI…YYGFLIVSDE (227 aa)) is accessory region. The cysteines at positions 554 and 690 are disulfide-linked. The 2-oxoglutarate site is built by Arg590 and Tyr648. One can recognise a Fe2OG dioxygenase domain in the interval 639–730 (ESNMMFVVRY…RYIMVSFINP (92 aa)). Fe cation contacts are provided by His659 and Asp661. The tract at residues 664-707 (TFSIDIALNKKGRDYEGGGVRYIRYNCTVPADEVGYAMMFPGRL) is important for dimerization. Residue Asn689 is glycosylated (N-linked (GlcNAc...) asparagine). His711 serves as a coordination point for Fe cation. Arg721 provides a ligand contact to 2-oxoglutarate.

Homodimer. It depends on Fe(2+) as a cofactor. Requires L-ascorbate as cofactor. Mn(2+) is required as a cofactor.

It localises to the rough endoplasmic reticulum. The protein localises to the endoplasmic reticulum lumen. It is found in the endoplasmic reticulum membrane. Its subcellular location is the secreted. The protein resides in the extracellular space. It carries out the reaction L-lysyl-[collagen] + 2-oxoglutarate + O2 = (5R)-5-hydroxy-L-lysyl-[collagen] + succinate + CO2. The enzyme catalyses (5R)-5-hydroxy-L-lysyl-[collagen] + UDP-alpha-D-galactose = (5R)-5-O-(beta-D-galactosyl)-5-hydroxy-L-lysyl-[collagen] + UDP + H(+). The catalysed reaction is (5R)-5-O-(beta-D-galactosyl)-5-hydroxy-L-lysyl-[collagen] + UDP-alpha-D-glucose = (5R)-5-O-[alpha-D-glucosyl-(1-&gt;2)-beta-D-galactosyl]-5-hydroxy-L-lysyl-[collagen] + UDP + H(+). In terms of biological role, multifunctional enzyme that catalyzes a series of post-translational modifications on Lys residues in procollagen. Catalyzes the formation of hydroxylysine residues in -Xaa-Lys-Gly- sequences in type IV collagens. Transfers galactose onto hydroxylysine groups, giving rise to galactosyl 5-hydroxylysine. Catalyzes the subsequent transfer of glucose moieties, giving rise to 1,2-glucosylgalactosyl-5-hydroxylysine residues. Essential for normal biosynthesis and secretion of type IV collagens. Essential for normal stability of the basement membrane. This chain is Multifunctional procollagen lysine hydroxylase and glycosyltransferase (let-268), found in Caenorhabditis elegans.